The sequence spans 314 residues: 3'-5' exoribonuclease YhaM (314 aa).

The segment at residues 14–90 (VDLYLLIKSS…QLKLRNIRPA (77 aa)) is a DNA-binding region (OB). Residues 163–279 (HVVSMLNLAK…LHYIDNLDAK (117 aa)) form the HD domain.

It belongs to the YhaM family.

Shows a 3'-5' exoribonuclease activity. The chain is 3'-5' exoribonuclease YhaM from Bacillus licheniformis (strain ATCC 14580 / DSM 13 / JCM 2505 / CCUG 7422 / NBRC 12200 / NCIMB 9375 / NCTC 10341 / NRRL NRS-1264 / Gibson 46).